Reading from the N-terminus, the 481-residue chain is DNA primase DnaG (481 aa).

One can recognise a Toprim domain in the interval 169–243 (DAILVVEGRA…DVDYVARAPD (75 aa)). E175, D217, and D219 together coordinate Mg(2+). The disordered stretch occupies residues 275–393 (RRRNKLAAQA…ARKEREPSEF (119 aa)). Residues 281–309 (AAQAAEKQAQAEAAQKAEAPAAAAPVQPQ) are compositionally biased toward low complexity. Residues 312–393 (YQQKEYPQRE…ARKEREPSEF (82 aa)) show a composition bias toward basic and acidic residues.

The protein belongs to the archaeal DnaG primase family. In terms of assembly, forms a ternary complex with MCM helicase and DNA. Component of the archaeal exosome complex. Requires Mg(2+) as cofactor.

It catalyses the reaction ssDNA + n NTP = ssDNA/pppN(pN)n-1 hybrid + (n-1) diphosphate.. RNA polymerase that catalyzes the synthesis of short RNA molecules used as primers for DNA polymerase during DNA replication. Also part of the exosome, which is a complex involved in RNA degradation. Acts as a poly(A)-binding protein that enhances the interaction between heteromeric, adenine-rich transcripts and the exosome. The polypeptide is DNA primase DnaG (Methanocella arvoryzae (strain DSM 22066 / NBRC 105507 / MRE50)).